The following is a 715-amino-acid chain: Lanosterol synthase erg7B (715 aa).

One copy of the PFTB 1 repeat lies at 111–153 (AIEIKNYLMARANPVDGGWGLHSEGDSSVFGTSLNYTVLRLLG). Residue Asp445 is the Proton donor of the active site. 2 PFTB repeats span residues 550–590 (IQRG…RSAG) and 599–640 (VRRG…VVQT).

This sequence belongs to the terpene cyclase/mutase family.

The protein localises to the lipid droplet. It is found in the endoplasmic reticulum membrane. The catalysed reaction is (S)-2,3-epoxysqualene = lanosterol. It participates in steroid metabolism; ergosterol biosynthesis. In terms of biological role, lanosterol synthase; part of the third module of ergosterol biosynthesis pathway that includes the late steps of the pathway. ERG7A and ERG7B catalyze the cyclization of (S)-2,3 oxidosqualene to lanosterol, a reaction that forms the sterol core. The third module or late pathway involves the ergosterol synthesis itself through consecutive reactions that mainly occur in the endoplasmic reticulum (ER) membrane. Firstly, the squalene synthase erg9 catalyzes the condensation of 2 farnesyl pyrophosphate moieties to form squalene, which is the precursor of all steroids. Squalene synthase is crucial for balancing the incorporation of farnesyl diphosphate (FPP) into sterol and nonsterol isoprene synthesis. Secondly, squalene is converted into lanosterol by the consecutive action of the squalene epoxidase erg1 and the lanosterol synthase erg7. Then, the delta(24)-sterol C-methyltransferase erg6 methylates lanosterol at C-24 to produce eburicol. Eburicol is the substrate of the sterol 14-alpha demethylase encoded by cyp51A and cyp51B, to yield 4,4,24-trimethyl ergosta-8,14,24(28)-trienol. The C-14 reductase erg24 then reduces the C14=C15 double bond which leads to 4,4-dimethylfecosterol. A sequence of further demethylations at C-4, involving the C-4 demethylation complex containing the C-4 methylsterol oxidases erg25A or erg25B, the sterol-4-alpha-carboxylate 3-dehydrogenase erg26 and the 3-keto-steroid reductase erg27, leads to the production of fecosterol via 4-methylfecosterol. The C-8 sterol isomerase erg2 then catalyzes the reaction which results in unsaturation at C-7 in the B ring of sterols and thus converts fecosterol to episterol. The sterol-C5-desaturase erg3B then catalyzes the introduction of a C-5 double bond in the B ring to produce 5-dehydroepisterol. The 2 other sterol-C5-desaturases, erg3A and erg3C, seem to be less important in ergosterol biosynthesis. The C-22 sterol desaturase erg5 further converts 5-dehydroepisterol into ergosta-5,7,22,24(28)-tetraen-3beta-ol by forming the C-22(23) double bond in the sterol side chain. Finally, ergosta-5,7,22,24(28)-tetraen-3beta-ol is substrate of the C-24(28) sterol reductases erg4A and erg4B to produce ergosterol. Possible alternative sterol biosynthetic pathways might exist from fecosterol to ergosterol, depending on the activities of the erg3 isoforms. The protein is Lanosterol synthase erg7B of Aspergillus fumigatus (strain ATCC MYA-4609 / CBS 101355 / FGSC A1100 / Af293) (Neosartorya fumigata).